The following is a 148-amino-acid chain: Large ribosomal subunit protein uL11 (148 aa).

The interval 89 to 108 (EKKKGSGAHKPGKEKVGQVT) is disordered.

It belongs to the universal ribosomal protein uL11 family. As to quaternary structure, part of the ribosomal stalk of the 50S ribosomal subunit. Interacts with L10 and the large rRNA to form the base of the stalk. L10 forms an elongated spine to which L12 dimers bind in a sequential fashion forming a multimeric L10(L12)X complex. In terms of processing, one or more lysine residues are methylated.

In terms of biological role, forms part of the ribosomal stalk which helps the ribosome interact with GTP-bound translation factors. This is Large ribosomal subunit protein uL11 from Anaeromyxobacter sp. (strain Fw109-5).